An 82-amino-acid polypeptide reads, in one-letter code: Cortexin-1 (82 aa).

The disordered stretch occupies residues 1–20 (MSSAWTLSPEPLPPSTGPPV). A helical membrane pass occupies residues 30–50 (TVFAFVLCLLVVLVLLMVRCV).

The protein belongs to the cortexin family.

It localises to the membrane. In terms of biological role, may mediate extracellular or intracellular signaling of cortical neurons during forebrain development. In Mus musculus (Mouse), this protein is Cortexin-1 (Ctxn1).